A 121-amino-acid polypeptide reads, in one-letter code: UPF0102 protein BVU_1879 (121 aa).

Belongs to the UPF0102 family.

In Phocaeicola vulgatus (strain ATCC 8482 / DSM 1447 / JCM 5826 / CCUG 4940 / NBRC 14291 / NCTC 11154) (Bacteroides vulgatus), this protein is UPF0102 protein BVU_1879.